The following is a 32-amino-acid chain: Enolase (32 aa).

This sequence belongs to the enolase family. In terms of assembly, homodimer. The cofactor is Mg(2+).

It localises to the cytoplasm. It carries out the reaction (2R)-2-phosphoglycerate = phosphoenolpyruvate + H2O. Its pathway is carbohydrate degradation; glycolysis; pyruvate from D-glyceraldehyde 3-phosphate: step 4/5. The sequence is that of Enolase from Imperata cylindrica (Cogon grass).